Reading from the N-terminus, the 432-residue chain is Glutamate-1-semialdehyde 2,1-aminomutase 2 (432 aa).

Residue K268 is modified to N6-(pyridoxal phosphate)lysine.

The protein belongs to the class-III pyridoxal-phosphate-dependent aminotransferase family. HemL subfamily. Homodimer. Pyridoxal 5'-phosphate serves as cofactor.

The protein resides in the cytoplasm. The catalysed reaction is (S)-4-amino-5-oxopentanoate = 5-aminolevulinate. It participates in porphyrin-containing compound metabolism; protoporphyrin-IX biosynthesis; 5-aminolevulinate from L-glutamyl-tRNA(Glu): step 2/2. This Listeria monocytogenes serotype 4b (strain F2365) protein is Glutamate-1-semialdehyde 2,1-aminomutase 2.